The chain runs to 558 residues: Atlastin-1 (558 aa).

The disordered stretch occupies residues 1-28 (MAKNRRDRNSWGGFSEKTYEWSSEEEEP). The N-terminal hypervariable region (HVR) stretch occupies residues 1-34 (MAKNRRDRNSWGGFSEKTYEWSSEEEEPVKKAGP). At 1–449 (MAKNRRDRNS…NIFHAARTPA (449 aa)) the chain is on the cytoplasmic side. A phosphoserine mark is found at S10, S22, and S23. One can recognise a GB1/RHD3-type G domain in the interval 64 to 309 (DKEVVAVSVA…LIPWLLSPES (246 aa)). R77, K78, G79, K80, S81, F82, Q148, R217, D218, V276, and N279 together coordinate GDP. Residues R77, K78, G79, K80, S81, and F82 each contribute to the GTP site. S81 is a Mg(2+) binding site. Residues R217, D218, and V276 each contribute to the GTP site. The segment at 347–438 (MLQATAEANN…YIQYIKHNDS (92 aa)) is 3HB (three-helix bundle) domain. K395 is modified (N6-acetyllysine). Residues 418-439 (LQQLETEIDELYIQYIKHNDSK) adopt a coiled-coil conformation. Residues 439–447 (KNIFHAART) are linker. Residues 450 to 470 (TLFVVIFITYVIAGVTGFIGL) traverse the membrane as a helical segment. D471 is a topological domain (lumenal). A helical membrane pass occupies residues 472–492 (IIASLCNMIMGLTLITLCTWA). Residues 493–558 (YIRYSGEYRE…STEQSEKKKM (66 aa)) lie on the Cytoplasmic side of the membrane. Positions 521–558 (NEALYKLYSAAATHRHLYHQAFPAPKSESTEQSEKKKM) are autoinhibitory domain.

This sequence belongs to the TRAFAC class dynamin-like GTPase superfamily. GB1/RHD3 GTPase family. GB1 subfamily. Monomeric and homodimeric. The homodimer, transiently formed by two molecules on opposing membranes, is the active form mediating ER membrane fusion. Interacts with REEP1, REEP5, RTN3 and RTN4 (via the transmembrane region); these proteins are involved in endoplasmic reticulum tubular network organization. Interacts with ZFYVE27; both proteins are involved in endoplasmic reticulum tubular network organization. Interacts with ARL6IP1; both proteins are involved in endoplasmic reticulum tubular network organization. Interacts with SPAST; the interaction is direct, could recruit SPAST to Golgi membranes. Interacts (via N-terminal region) with MAP4K4 (via CNH regulatory domain). May interact with TMED2. Interacts with CPT1C. In terms of processing, phosphorylated. Phosphorylation, by different kinases, of the N-terminal hypervariable region (HVR) regulates the ATL1-mediated membrane tethering step.

It localises to the endoplasmic reticulum membrane. The protein localises to the golgi apparatus membrane. Its subcellular location is the cell projection. It is found in the axon. It catalyses the reaction GTP + H2O = GDP + phosphate + H(+). Functionally, atlastin-1 (ATL1) is a membrane-anchored GTPase that mediates the GTP-dependent fusion of endoplasmic reticulum (ER) membranes, maintaining the continuous ER network. It facilitates the formation of three-way junctions where ER tubules intersect. Two atlastin-1 on neighboring ER tubules bind GTP and form loose homodimers through the GB1/RHD3-type G domains and 3HB regions. Upon GTP hydrolysis, the 3HB regions tighten, pulling the membranes together to drive their fusion. After fusion, the homodimer disassembles upon release of inorganic phosphate (Pi). Subsequently, GDP dissociates, resetting the monomers to a conformation ready for a new fusion cycle. May also regulate more or less directly Golgi biogenesis. Indirectly regulates axonal development. This chain is Atlastin-1, found in Bos taurus (Bovine).